The following is a 196-amino-acid chain: MSSLLYIFLLLAVFISHRGVTTEAAVEPVKDINGKSLLTGVNYYILPVIRGRGGGLTMSNLKTETCPTSVIQDQFEVSQGLPVKFSPYDKSRTIPVSTDVNIKFSPTSIWELANFDETTKQWFISTCGVEGNPGQKTVDNWFKIDKFEKDYKIRFCPTVCNFCKVICRDVGVFVQDGKRRLALSDVPLKVMFKRAY.

Residues 1 to 19 form the signal peptide; it reads MSSLLYIFLLLAVFISHRG. A disulfide bond links Cys-156 and Cys-167.

It belongs to the protease inhibitor I3 (leguminous Kunitz-type inhibitor) family.

It localises to the endoplasmic reticulum. In terms of biological role, can inhibit both serine proteases and cysteine proteases. May be involved in the modulation of the proteases that participate in the hydrolysis of dietary proteins in the gut of spider mites. The chain is Kunitz trypsin inhibitor 5 from Arabidopsis thaliana (Mouse-ear cress).